The following is a 667-amino-acid chain: MSSQPAGNQTSPGPTEDYSYGSWYIDEPQGGEELQPEGEVPSCHTSIPPSLYHACLASLSILVLLLLAMLVRRRQLWPDCVRGRPGLPSPVDFLAGDRPQAVPAAVFVVLFSSLCLLLPDEDPLPFLTLASAPSQDGKTEAPRGAWKILGLFYYAALCYPLAACATAGHTAAHLLGSTLSWAHLGVQVWQRAECPQVPKIYKYYSLLASLPLLLGLGFLSLWYPVQLVRSFSCRTGAGSKGLQSSYSEEYLRNLLCRKKLGSSSHTSKHGFLSWAWVCLRHCIYTPQPGFRLPLKLVLSATLTGTAIYQVALLLLVGMVPNIQKVRAGVTTDVSYLLAGFGIVLSEDKQEVVELVKHHLWALEVCYISALVLSCSLTFLVLMRSLVTHRTNLRALHRGAALDSSPLHRSPHPSRRAIFCWMSFSAYQTAFICLGLLVQQIIFFLGTTALAFLVLMPVLHGRNLLLFRSLESSWPFWLTLALAVILQSMAAHWVFLETHDGHPQLTNRRVLYAATFLLFPLNVLVGAMVATWRVLLSALYNAIHLGQMDLSLLPPRAATLDPGYYTYRNFLKIEVSQSHPAMTAFCSLLLQARSLLPRTMAAPQDSLRPGEEDEGMQLLQTKDSMAKGARPRANRGRARWGLAYTLLHNPTLQVFRKTALLGANGAQP.

Positions methionine 1–glycine 13 are enriched in polar residues. Residues methionine 1 to serine 22 form a disordered region. Over methionine 1–serine 50 the chain is Extracellular. Residue asparagine 8 is glycosylated (N-linked (GlcNAc...) asparagine). Residues leucine 51–valine 71 form a helical membrane-spanning segment. The Cytoplasmic portion of the chain corresponds to arginine 72–arginine 98. The helical transmembrane segment at proline 99–proline 119 threads the bilayer. Topologically, residues aspartate 120 to glycine 144 are extracellular. The chain crosses the membrane as a helical span at residues alanine 145–alanine 165. Topologically, residues threonine 166–glycine 168 are cytoplasmic. A helical membrane pass occupies residues histidine 169–tryptophan 189. Topologically, residues glutamine 190–serine 205 are extracellular. A helical transmembrane segment spans residues leucine 206–glutamine 226. The Cytoplasmic portion of the chain corresponds to leucine 227 to lysine 295. The interaction with RBP1 stretch occupies residues threonine 235 to proline 293. A helical membrane pass occupies residues leucine 296 to valine 316. Residues glycine 317–isoleucine 367 are Extracellular-facing. Residues serine 368–histidine 388 form a helical membrane-spanning segment. At arginine 389–serine 422 the chain is on the cytoplasmic side. Residues phenylalanine 423–phenylalanine 443 form a helical membrane-spanning segment. Residues leucine 444–tryptophan 473 lie on the Extracellular side of the membrane. A helical membrane pass occupies residues proline 474–phenylalanine 494. Over leucine 495–valine 509 the chain is Cytoplasmic. An intramembrane region (helical) is located at residues leucine 510 to methionine 547. The Cytoplasmic segment spans residues aspartate 548–proline 667. A Phosphotyrosine modification is found at tyrosine 643.

In terms of assembly, homodimer. Interacts with JAK2 and STAT5. Interacts (via extracellular domains) with RBP4. Interacts (via cytoplasmic domains) with RBP1. Phosphorylated on tyrosine residues in response to RBP4 binding. Phosphorylation requires the presence of LRAT, suggesting it may be triggered by the uptake of retinol that is then metabolized within the cell to retinoids that function as signaling molecules.

The protein localises to the cell membrane. Functions as a retinol transporter. Accepts all-trans retinol from the extracellular retinol-binding protein RBP4, facilitates retinol transport across the cell membrane, and then transfers retinol to the cytoplasmic retinol-binding protein RBP1. Retinol uptake is enhanced by LRAT, an enzyme that converts retinol to all-trans retinyl esters, the storage forms of vitamin A. Contributes to the activation of a signaling cascade that depends on retinol transport and LRAT-dependent generation of retinol metabolites that then trigger activation of JAK2 and its target STAT5, and ultimately increase the expression of SOCS3 and inhibit cellular responses to insulin. Important for the homeostasis of vitamin A and its derivatives, such as retinoic acid. STRA6-mediated transport is particularly important in the eye, and under conditions of dietary vitamin A deficiency. Does not transport retinoic acid. This is Receptor for retinol uptake STRA6 (STRA6) from Pongo abelii (Sumatran orangutan).